Here is a 329-residue protein sequence, read N- to C-terminus: Malate dehydrogenase (329 aa).

11-17 contributes to the NAD(+) binding site; it reads GAAGQIG. Positions 92 and 98 each coordinate substrate. Residues Asn105, Gln112, and 129–131 each bind NAD(+); that span reads VGN. Substrate contacts are provided by Asn131 and Arg165. His190 (proton acceptor) is an active-site residue.

This sequence belongs to the LDH/MDH superfamily. MDH type 2 family.

The enzyme catalyses (S)-malate + NAD(+) = oxaloacetate + NADH + H(+). In terms of biological role, catalyzes the reversible oxidation of malate to oxaloacetate. The protein is Malate dehydrogenase of Laribacter hongkongensis (strain HLHK9).